Reading from the N-terminus, the 817-residue chain is MYGVCGCCGALRPRYKRLVDNIFPEDPEDGLVKTNMEKLTFYALSAPEKLDRIGAYLSERLIRDVGRHRYGYVCIAMEALDQLLMACHCQSINLFVESFLKMVAKLLESEKPNLQILGTNSFVKFANIEEDTPSYHRSYDFFVSRFSEMCHSSHDDLEIKTKIRMSGIKGLQGVVRKTVNDELQANIWDPQHMDKIVPSLLFNLQHVEEAESRSPSPLQAPEKEKENPAELAERCLRELLGRAAFGNIKNAIKPVLIHLDNHSLWEPKVFATRCFKIIMYSIQPQHSHLVIQQLLSHLDANSRSAATVRAGIVEVLSEAAIIAATGSVGPTVLEMFNTLLRQLRLSIDYALTGSYDGAVSLGSKIIKEHEECMFQEAVIKTIGSFASTLPTYQRSEVILFIMSKVPLPSVHHPVETGRTGENRNRLTQIMLLKSLLQVSTGFQCNNMMSALPSNFLDRLLSTALMEDAEIRLFVLEILISFIDRHGNRHKFSTISTLGDISVLKLKVDKCSRQDTVFMKKHSQQLYRHIYLSCKEETNIQKHYEALYGLLALISIELANEEVVVDLIRLVLAVQDVAQVNEENLPTYNRCALYALGAAYLNLISQLTTVPAFCQHIHEVIETRKKEAPYMLPEDVFVEKPRLSQNLDGVVIEFLFRQSKISEVLGGSGYNSDRLCLPYIPQLTDEDRLSKRKSIGETISLQVEVESRNSPEKEERVPAEEITYETLKKAIVDSVAVEEQERERQRQVVEKFQKAPFEEIAAHCGARASLLQSKLNQIFEITIRPPPSPSGTISAAYGQPQNHSIPVYEMKFPDLCVY.

Phosphoserine is present on residues Ser-212, Ser-214, and Ser-216.

The protein belongs to the EFR3 family. Component of a phosphatidylinositol 4-kinase (PI4K) complex, composed of PI4KA, EFR3 (EFR3A or EFR3B), TTC7 (TTC7A or TTC7B) and HYCC (HYCC1 or HYCC2). Post-translationally, palmitoylated at its N-terminus, anchoring the protein to the plasma membrane. As to expression, widely expressed.

Its subcellular location is the cell membrane. The protein resides in the cytoplasm. The protein localises to the cytosol. Its function is as follows. Component of a complex required to localize phosphatidylinositol 4-kinase (PI4K) to the plasma membrane. The complex acts as a regulator of phosphatidylinositol 4-phosphate (PtdIns(4)P) synthesis. In the complex, EFR3B probably acts as the membrane-anchoring component. Also involved in responsiveness to G-protein-coupled receptors; it is however unclear whether this role is direct or indirect. In Mus musculus (Mouse), this protein is Protein EFR3 homolog B (Efr3b).